Reading from the N-terminus, the 174-residue chain is MNSLLIMGYTSFDLGIFNEKDIKVSIIKKTIKRKLINFLEEGLRWVIFTGNLGFEYWALEVAKELQTDYEFQIGTIFPFETHGQNWNENNQIKLASFKQVDFVKYAFEAYENPGQFRQYNEFLLENTEGSFVFYDEENETKLKYMVEKMKQSSNYEVYLLNFEDLQETFEEMND.

This sequence belongs to the UPF0398 family.

This is UPF0398 protein llmg_0513 from Lactococcus lactis subsp. cremoris (strain MG1363).